The chain runs to 1311 residues: Transcriptional regulator ATRX homolog (1311 aa).

Positions 1-384 (MGKKNPNARH…KQKNKRKHIR (384 aa)) are disordered. Residues 28 to 40 (SRRESATESKSAS) show a composition bias toward basic and acidic residues. The span at 61–83 (KASGKATVSSSSDSDQAVANSSA) shows a compositional bias: low complexity. Residues 114–125 (RGSQQKNVTIND) show a composition bias toward polar residues. 2 positions are modified to phosphoserine: serine 126 and serine 127. The span at 155-166 (SDSEEVDEEEES) shows a compositional bias: acidic residues. The segment covering 181–202 (KPEKNSSKASKESIEKRQKAQK) has biased composition (basic and acidic residues). The span at 219–237 (RRGSLSSERSSRASSSRAE) shows a compositional bias: low complexity. The span at 241–265 (RPKRCVVRLKRVSLPKTKPAQKPKK) shows a compositional bias: basic residues. A phosphoserine mark is found at serine 267, serine 268, and serine 270. The span at 290–306 (EADSDYEAPAAEEEEEE) shows a compositional bias: acidic residues. Serine 336, serine 338, serine 342, and serine 343 each carry phosphoserine. Residues 336-351 (SESDKGSSDFEPEEKQ) show a composition bias toward basic and acidic residues. A compositionally biased stretch (basic residues) spans 352–361 (KKKGRKRIKK). Residues 476-664 (ESQEKPGSGC…YCMIQFVKPN (189 aa)) form the Helicase ATP-binding domain. 489–496 (HCMGLGKT) is a binding site for ATP. Positions 615–618 (DEGH) match the DEGH box motif. A disordered region spans residues 837-878 (ASSGKVKKRKTRNGNAGGGDSDSDLEMLGGLGGGSSVQKDDP). Phosphoserine is present on residues serine 857 and serine 859. Positions 905–1085 (RLLQQCEAIG…SRHYNQTDLM (181 aa)) constitute a Helicase C-terminal domain. Residues 1285–1311 (MAGGSVAHGPPAAPAPGFEPDKVYEID) are disordered.

It belongs to the SNF2/RAD54 helicase family.

It is found in the nucleus. It localises to the chromosome. The catalysed reaction is ATP + H2O = ADP + phosphate + H(+). In terms of biological role, global transcriptional regulator. Modifies gene expression by affecting chromatin. In Drosophila melanogaster (Fruit fly), this protein is Transcriptional regulator ATRX homolog (XNP).